The chain runs to 369 residues: ATP-dependent (S)-NAD(P)H-hydrate dehydratase (369 aa).

Positions 14-356 constitute a YjeF C-terminal domain; sequence LFQKARKLVP…DEVHESFLTL (343 aa). Residues glycine 126 and 179–185 each bind (6S)-NADPHX; that span reads NVNEFSR. ATP contacts are provided by residues 231-235 and 250-259; these read KGPHD and GGLKRSGGQG. Residue aspartate 260 coordinates (6S)-NADPHX. The span at 284–306 shows a compositional bias: basic and acidic residues; that stretch reads GEQEHSKEAENKEEVQGELESNK. Positions 284 to 307 are disordered; sequence GEQEHSKEAENKEEVQGELESNKR.

Belongs to the NnrD/CARKD family. It depends on Mg(2+) as a cofactor.

The protein resides in the cytoplasm. It catalyses the reaction (6S)-NADHX + ATP = ADP + phosphate + NADH + H(+). The enzyme catalyses (6S)-NADPHX + ATP = ADP + phosphate + NADPH + H(+). In terms of biological role, catalyzes the dehydration of the S-form of NAD(P)HX at the expense of ATP, which is converted to ADP. Together with NAD(P)HX epimerase, which catalyzes the epimerization of the S- and R-forms, the enzyme allows the repair of both epimers of NAD(P)HX, a damaged form of NAD(P)H that is a result of enzymatic or heat-dependent hydration. This Emericella nidulans (strain FGSC A4 / ATCC 38163 / CBS 112.46 / NRRL 194 / M139) (Aspergillus nidulans) protein is ATP-dependent (S)-NAD(P)H-hydrate dehydratase.